Consider the following 320-residue polypeptide: Cytochrome f (320 aa).

A signal peptide spans Met1 to Asn35. Heme contacts are provided by Phe37, Cys57, Cys60, and His61. The helical transmembrane segment at Ile286 to Lys306 threads the bilayer.

Belongs to the cytochrome f family. In terms of assembly, the 4 large subunits of the cytochrome b6-f complex are cytochrome b6, subunit IV (17 kDa polypeptide, petD), cytochrome f and the Rieske protein, while the 4 small subunits are PetG, PetL, PetM and PetN. The complex functions as a dimer. Heme serves as cofactor.

The protein localises to the plastid. It is found in the chloroplast thylakoid membrane. Its function is as follows. Component of the cytochrome b6-f complex, which mediates electron transfer between photosystem II (PSII) and photosystem I (PSI), cyclic electron flow around PSI, and state transitions. In Pyropia yezoensis (Susabi-nori), this protein is Cytochrome f.